Consider the following 331-residue polypeptide: (E)-beta farnesene synthase MBR_03882 (331 aa).

The protein belongs to the trichodiene synthase family.

It carries out the reaction (2E,6E)-farnesyl diphosphate = (E)-beta-farnesene + diphosphate. Terpene synthase that catalyzes the conversion of (2E,6E)-farnesyl diphosphate (FPP) into the volatile sesquiterpene (E)-beta-farnesene. The protein is (E)-beta farnesene synthase MBR_03882 of Metarhizium brunneum (strain ARSEF 3297).